The sequence spans 208 residues: Histone 24 (208 aa).

S2 is modified (N-acetylserine). The residue at position 14 (K14) is an N6-methyllysine. The H15 domain maps to 37–113 (AHPPYINMIK…GANGRFRVPE (77 aa)). Positions 101–208 (AGSGANGRFR…KKAAKPAAKA (108 aa)) are disordered. Over residues 114–138 (KAAAAKKPAAAKKPAAAKKPAAAKK) the composition is skewed to low complexity. Basic residues-rich tracts occupy residues 144-155 (KAKKPAAAKPKK) and 162-202 (KVKK…KKAA).

The protein belongs to the histone H1/H5 family. Interacts with nmad-1. Interacts (when monomethylated at Lys-14) with chromobox protein homolog hpl-1; the interaction is direct. Interacts (when monomethylated at Lys-14) with histone H3 (when trimethylated on 'Lys-27'); the interaction is direct. Post-translationally, methylation at lysine 14 is necessary to regulate male tail development.

It is found in the nucleus. The protein resides in the chromosome. It localises to the cytoplasm. Histones H1 are necessary for the condensation of nucleosome chains into higher-order structures. Probably does not act as global transcriptional repressor. Acting in concert with chromobox protein homologs hpl-1 and hpl-2, involved in reproduction, somatic gonad development, male tail development, and vulval cell fate decisions; perhaps as a result of modulating expression of Hox genes mab-5 and egl-5. Plays a role in linking epigenetic regulation with the innate immune response. The sequence is that of Histone 24 from Caenorhabditis elegans.